Consider the following 338-residue polypeptide: Heat shock factor 2-binding protein (338 aa).

Residues 1–20 (MAATVGDGSGTEEACRNMES) are disordered. The stretch at 12-126 (EEACRNMESK…LLQQAEYCTQ (115 aa)) forms a coiled coil. An interaction with BRME1 region spans residues 18 to 55 (MESKEEFVKVRKKDLERLTTEVMQIRDFLPRILNGELL). The tract at residues 87-338 (ARLETAQADS…EDLRALDCNV (252 aa)) is interaction with BRCA2.

As to quaternary structure, interacts (via C-terminus) with BNC1. Associates with HSF2. The interaction seems to occur between the trimerization domain of HSF2 and the N-terminal hydrophilic region of HSF2BP. Interacts (via N-terminus) with BRME1. Interacts with BRCA2 and BRME1; the interactions are direct and allow the formation of a ternary complex. The complex BRME1:HSF2BP:BRCA2 interacts with SPATA22, MEIOB and RAD51. Post-translationally, sumoylated by UBE2I in response to MEKK1-mediated stimuli. Expressed in testis and, to a lesser extent, in lung and muscle.

The protein localises to the cytoplasm. It is found in the chromosome. Meiotic recombination factor component of recombination bridges involved in meiotic double-strand break repair. Modulates the localization of recombinases DMC1:RAD51 to meiotic double-strand break (DSB) sites through the interaction with BRCA2 and its recruitment during meiotic recombination. Indispensable for the DSB repair, homologous synapsis, and crossover formation that are needed for progression past metaphase I, is essential for spermatogenesis and male fertility. Required for proper recombinase recruitment in female meiosis. Inhibits BNC1 transcriptional activity during spermatogenesis, probably by sequestering it in the cytoplasm. May be involved in modulating HSF2 activation in testis. This chain is Heat shock factor 2-binding protein, found in Mus musculus (Mouse).